A 190-amino-acid polypeptide reads, in one-letter code: ATP synthase subunit b 1 (190 aa).

The chain crosses the membrane as a helical span at residues 35–55 (DFVVLLGFLLFLAILFYFGVP).

It belongs to the ATPase B chain family. As to quaternary structure, F-type ATPases have 2 components, F(1) - the catalytic core - and F(0) - the membrane proton channel. F(1) has five subunits: alpha(3), beta(3), gamma(1), delta(1), epsilon(1). F(0) has three main subunits: a(1), b(2) and c(10-14). The alpha and beta chains form an alternating ring which encloses part of the gamma chain. F(1) is attached to F(0) by a central stalk formed by the gamma and epsilon chains, while a peripheral stalk is formed by the delta and b chains.

It localises to the cell inner membrane. F(1)F(0) ATP synthase produces ATP from ADP in the presence of a proton or sodium gradient. F-type ATPases consist of two structural domains, F(1) containing the extramembraneous catalytic core and F(0) containing the membrane proton channel, linked together by a central stalk and a peripheral stalk. During catalysis, ATP synthesis in the catalytic domain of F(1) is coupled via a rotary mechanism of the central stalk subunits to proton translocation. In terms of biological role, component of the F(0) channel, it forms part of the peripheral stalk, linking F(1) to F(0). The sequence is that of ATP synthase subunit b 1 from Jannaschia sp. (strain CCS1).